Here is a 198-residue protein sequence, read N- to C-terminus: GTP cyclohydrolase-2 (198 aa).

52 to 56 (RMHSE) is a binding site for GTP. Residues Cys-57, Cys-68, and Cys-70 each contribute to the Zn(2+) site. GTP contacts are provided by residues Gln-73, 94–96 (EGR), and Thr-116. Asp-128 functions as the Proton acceptor in the catalytic mechanism. The active-site Nucleophile is Arg-130. GTP-binding residues include Thr-151 and Lys-156.

This sequence belongs to the GTP cyclohydrolase II family. Zn(2+) is required as a cofactor.

The catalysed reaction is GTP + 4 H2O = 2,5-diamino-6-hydroxy-4-(5-phosphoribosylamino)-pyrimidine + formate + 2 phosphate + 3 H(+). The protein operates within cofactor biosynthesis; riboflavin biosynthesis; 5-amino-6-(D-ribitylamino)uracil from GTP: step 1/4. In terms of biological role, catalyzes the conversion of GTP to 2,5-diamino-6-ribosylamino-4(3H)-pyrimidinone 5'-phosphate (DARP), formate and pyrophosphate. The sequence is that of GTP cyclohydrolase-2 from Vibrio parahaemolyticus serotype O3:K6 (strain RIMD 2210633).